The following is a 282-amino-acid chain: Pantothenate synthetase (282 aa).

ATP is bound at residue 30–37; sequence MGNLHDGH. The active-site Proton donor is histidine 37. A (R)-pantoate-binding site is contributed by glutamine 61. Glutamine 61 provides a ligand contact to beta-alanine. 149 to 152 is an ATP binding site; the sequence is GNKD. Glutamine 155 is a binding site for (R)-pantoate. ATP is bound by residues alanine 178 and 186–189; that span reads MSSR.

This sequence belongs to the pantothenate synthetase family. In terms of assembly, homodimer.

The protein resides in the cytoplasm. The enzyme catalyses (R)-pantoate + beta-alanine + ATP = (R)-pantothenate + AMP + diphosphate + H(+). It participates in cofactor biosynthesis; (R)-pantothenate biosynthesis; (R)-pantothenate from (R)-pantoate and beta-alanine: step 1/1. Its function is as follows. Catalyzes the condensation of pantoate with beta-alanine in an ATP-dependent reaction via a pantoyl-adenylate intermediate. This is Pantothenate synthetase from Marinomonas sp. (strain MWYL1).